We begin with the raw amino-acid sequence, 34 residues long: NVCDGDACPDGVCRSGCTCDFNVAQRKDTCFYPQ.

Cystine bridges form between Cys-3–Cys-17, Cys-8–Cys-19, and Cys-13–Cys-30. Position 34 is a glutamine amide (Gln-34).

As to expression, expressed by the venom duct.

It localises to the secreted. The protein is Turripeptide Pal9a of Polystira albida (White giant-turris).